A 393-amino-acid chain; its full sequence is tRNA-specific 2-thiouridylase MnmA (393 aa).

Residues 19 to 26 (AMSGGVDS) and L45 each bind ATP. C113 acts as the Nucleophile in catalysis. C113 and C210 are oxidised to a cystine. G137 lines the ATP pocket. Residues 160–162 (RDQ) are interaction with tRNA. Catalysis depends on C210, which acts as the Cysteine persulfide intermediate.

This sequence belongs to the MnmA/TRMU family.

The protein localises to the cytoplasm. It catalyses the reaction S-sulfanyl-L-cysteinyl-[protein] + uridine(34) in tRNA + AH2 + ATP = 2-thiouridine(34) in tRNA + L-cysteinyl-[protein] + A + AMP + diphosphate + H(+). Functionally, catalyzes the 2-thiolation of uridine at the wobble position (U34) of tRNA, leading to the formation of s(2)U34. The sequence is that of tRNA-specific 2-thiouridylase MnmA from Afipia carboxidovorans (strain ATCC 49405 / DSM 1227 / KCTC 32145 / OM5) (Oligotropha carboxidovorans).